The following is a 492-amino-acid chain: Protein KOKOPELLI (492 aa).

2 disordered regions span residues 218 to 354 (VTSP…RNVM) and 394 to 426 (SKFH…QHQG). Residues 256–270 (QETETFDDDSSETEA) are compositionally biased toward acidic residues. Residues 287-305 (STSQEYSGETGSSSGSEWE) show a composition bias toward low complexity. A compositionally biased stretch (polar residues) spans 317 to 336 (ESSYPPQNDDSVSEVSTSPP). Composition is skewed to basic and acidic residues over residues 337–348 (HTDRDTSREPGK) and 403–412 (KSKERKRPMS).

As to expression, mostly expressed in pollen and open flowers and, to a lower extent, in closed flowers.

Positively regulates reproductive function by facilitating male gametophyte formation and double fertilization. The chain is Protein KOKOPELLI from Arabidopsis thaliana (Mouse-ear cress).